The primary structure comprises 497 residues: Envelope glycoprotein E (497 aa).

Topologically, residues methionine 1–threonine 398 are virion surface. Residues asparagine 60, asparagine 133, asparagine 148, asparagine 203, asparagine 277, asparagine 366, and asparagine 388 are each glycosylated (N-linked (GlcNAc...) asparagine; by host). Residues serine 399 to isoleucine 419 form a helical membrane-spanning segment. Residues arginine 420–histidine 497 are Intravirion-facing.

Belongs to the alphaherpesvirinae glycoprotein E family. Interacts with gI. Phosphorylated within the acidic cluster. Phosphorylation determines whether endocytosed viral gE traffics to the trans-Golgi network or recycles to the cell membrane.

The protein resides in the virion membrane. It is found in the host cell membrane. The protein localises to the host cell junction. Its subcellular location is the host Golgi apparatus membrane. It localises to the host endosome membrane. In epithelial cells, the heterodimer gE/gI is required for the cell-to-cell spread of the virus, by sorting nascent virions to cell junctions. Once the virus reaches the cell junctions, virus particles can spread to adjacent cells extremely rapidly through interactions with cellular receptors that accumulate at these junctions. Implicated in basolateral spread in polarized cells. In neuronal cells, gE/gI is essential for the anterograde spread of the infection throughout the host nervous system. Together with US9, the heterodimer gE/gI is involved in the sorting and transport of viral structural components toward axon tips. The protein is Envelope glycoprotein E (MDV096) of Gallus gallus (Chicken).